A 434-amino-acid polypeptide reads, in one-letter code: MTGAVTIIGGGLAGCEAAWQIAGRGVRVVLREMKPQRYSPAHHLSGLAELVCSNSLRGESLENAVGLLKEELRRAGSLIMAAADATRVPAGGALAVDRELFSSYVTERIEGHPLIELVREEVTELPAEGVLVIASGPLTSDALAERLKQITGDSLYFYDAIAPIVAADSLDSDKVFRASRYGKGDGDDYLNCPLSEEEYERFVDAVLAAEKVPARDFEKVVHFEGCMPVEEMAERGRETLRFGPLKPVGLTDPRTGREPHAVVQLRAENREGTLFNLVGFQTKLTWPEQRRVFRMIPGLESAEFVRLGSMHRNTFINAPTLLEPTFRLKGDPRTFFAGQITGVEGYVESAGSGFLAGINSARLVRGEDPAVPPPVTALGALVAHITTAPARHFQPMNVNYGLFPPLEGKVKKKDRRGRLAERALAELDHWLATV.

G9–G14 contacts FAD.

It belongs to the MnmG family. TrmFO subfamily. The cofactor is FAD.

It is found in the cytoplasm. The enzyme catalyses uridine(54) in tRNA + (6R)-5,10-methylene-5,6,7,8-tetrahydrofolate + NADH + H(+) = 5-methyluridine(54) in tRNA + (6S)-5,6,7,8-tetrahydrofolate + NAD(+). It catalyses the reaction uridine(54) in tRNA + (6R)-5,10-methylene-5,6,7,8-tetrahydrofolate + NADPH + H(+) = 5-methyluridine(54) in tRNA + (6S)-5,6,7,8-tetrahydrofolate + NADP(+). Catalyzes the folate-dependent formation of 5-methyl-uridine at position 54 (M-5-U54) in all tRNAs. This chain is Methylenetetrahydrofolate--tRNA-(uracil-5-)-methyltransferase TrmFO, found in Geobacter sulfurreducens (strain ATCC 51573 / DSM 12127 / PCA).